We begin with the raw amino-acid sequence, 689 residues long: Armadillo-like helical domain-containing protein 3 (689 aa).

A helical transmembrane segment spans residues 520–538; sequence IFTLALMIVNLFNMFITYG.

It belongs to the ARMH3 family. Interacts with PI4KB. Interacts with GBF1.

It is found in the golgi apparatus membrane. It localises to the cytoplasm. Its function is as follows. Involved in GBF1 recruitment, Golgi maintenance and protein secretion. The protein is Armadillo-like helical domain-containing protein 3 of Homo sapiens (Human).